Here is a 712-residue protein sequence, read N- to C-terminus: Polyribonucleotide nucleotidyltransferase (712 aa).

The Mg(2+) site is built by aspartate 487 and aspartate 493. In terms of domain architecture, KH spans 554–613; it reads PKIITMTINPDKIRDVIGPSGKQINKIIEETGVKIDIEQDGTVFISSINQEMNDKAKKII. One can recognise an S1 motif domain in the interval 623–691; that stretch reads GEIYEGKVKR…KQGRVNLSRK (69 aa).

This sequence belongs to the polyribonucleotide nucleotidyltransferase family. It depends on Mg(2+) as a cofactor.

It localises to the cytoplasm. It carries out the reaction RNA(n+1) + phosphate = RNA(n) + a ribonucleoside 5'-diphosphate. Involved in mRNA degradation. Catalyzes the phosphorolysis of single-stranded polyribonucleotides processively in the 3'- to 5'-direction. The protein is Polyribonucleotide nucleotidyltransferase of Bacillus cereus (strain AH820).